Reading from the N-terminus, the 101-residue chain is Apolipoprotein C-II (101 aa).

A signal peptide spans 1 to 22 (MGTRLLPALFLVLLVLGFEVQG). The interval 23 to 38 (TQQPQQDEMPSPTFLT) is O-glycosylated at one site. Positions 66-74 (AVDEKLRDL) are lipid binding. The lipoprotein lipase cofactor stretch occupies residues 78–101 (STAAMSTYTGIFTDQVLSVLKGEE).

Belongs to the apolipoprotein C2 family. Post-translationally, proapolipoprotein C-II is synthesized as a sialic acid containing glycoprotein which is subsequently desialylated prior to its proteolytic processing. Proapolipoprotein C-II, the major form found in plasma undergoes proteolytic cleavage of its N-terminal hexapeptide to generate apolipoprotein C-II, which occurs as the minor form in plasma. As to expression, liver and intestine.

Its subcellular location is the secreted. In terms of biological role, component of chylomicrons, very low-density lipoproteins (VLDL), low-density lipoproteins (LDL), and high-density lipoproteins (HDL) in plasma. Plays an important role in lipoprotein metabolism as an activator of lipoprotein lipase. Both proapolipoprotein C-II and apolipoprotein C-II can activate lipoprotein lipase. In normolipidemic individuals, it is mainly distributed in the HDL, whereas in hypertriglyceridemic individuals, predominantly found in the VLDL and LDL. The protein is Apolipoprotein C-II (APOC2) of Homo sapiens (Human).